An 840-amino-acid polypeptide reads, in one-letter code: UPF0508 protein SCY_2952 (840 aa).

It belongs to the UPF0508 family.

In Saccharomyces cerevisiae (strain YJM789) (Baker's yeast), this protein is UPF0508 protein SCY_2952.